We begin with the raw amino-acid sequence, 486 residues long: Fructose dehydrogenase cytochrome subunit (486 aa).

The N-terminal stretch at Met1–Ala25 is a signal peptide. Cytochrome c domains lie at Pro38–Val142, Asp186–Pro294, and Thr330–Phe423. 9 residues coordinate heme c: Cys52, Cys55, His56, Cys201, Cys204, His205, Cys343, Cys346, and His347. Residues Leu458–Ile478 form a helical membrane-spanning segment.

Heterotrimer composed of FdhL, FdhS and FdhC. Binds 3 heme c groups covalently per subunit.

It is found in the cell membrane. Functionally, cytochrome subunit of fructose dehydrogenase, an enzyme that catalyzes the oxidation of D-fructose to produce 5-keto-D-fructose. In the complex, mediates both the electron transfer to ubiquinone and the anchoring of the complex to the membrane. The chain is Fructose dehydrogenase cytochrome subunit (fdhC) from Gluconobacter japonicus.